The primary structure comprises 192 residues: uncharacterized protein (192 aa).

Positions 168 to 192 (PLWRKSEAGSRKARTSNSGGPTKRA) are disordered. Positions 182–192 (TSNSGGPTKRA) are enriched in polar residues.

This sequence to A.xylinum IS1268 ORFA.

This is an uncharacterized protein from Sinorhizobium fredii (strain NBRC 101917 / NGR234).